The following is a 222-amino-acid chain: MKKHLLPLALLFSGISPAQALDVGDISSFMNSDSSTLSKTIQNSTDSGRLINIRLERLSSPLDDGQVIAMDKPDELLLTPASLLLPAQASEVIRFFYKGPADEKERYYRIVWFDQALSDAQRDNANRSAVATASARIGTILVVAPRQANYHFQYANGSLTNTGNATLRILAYGPCLKAANGKECKENYYLMPGKSRRFTHVDTADNKGRVALWQGDKFIPVK.

An N-terminal signal peptide occupies residues 1 to 20 (MKKHLLPLALLFSGISPAQA).

The protein belongs to the EcpB/EcpE family.

Part of the ecpRABCDE operon, which encodes the E.coli common pilus (ECP). ECP is found in both commensal and pathogenic strains and plays a dual role in early-stage biofilm development and host cell recognition. The polypeptide is Probable fimbrial chaperone EcpB (ecpB) (Escherichia coli O18:K1:H7 (strain IHE3034 / ExPEC)).